Here is a 261-residue protein sequence, read N- to C-terminus: Cytochrome c oxidase subunit 3 (261 aa).

Residues 1–15 are Mitochondrial matrix-facing; sequence MTHQTHAYHMVNPSP. Residues 16–34 traverse the membrane as a helical segment; that stretch reads WPLTGALSALLMTSGLIMW. Over 35-40 the chain is Mitochondrial intermembrane; sequence FHFNST. A helical membrane pass occupies residues 41 to 66; it reads TLLMLGLTTNMLTMYQWWRDVIREST. Residues 67-72 are Mitochondrial matrix-facing; sequence FQGHHT. The helical transmembrane segment at 73–105 threads the bilayer; that stretch reads PNVQKGLRYGMILFIISEVLFFTGFFWAFYHSS. Residues 106 to 128 lie on the Mitochondrial intermembrane side of the membrane; that stretch reads LAPTPELGGCWPPTGIHPLNPLE. Residues 129 to 152 form a helical membrane-spanning segment; it reads VPLLNTSVLLASGVSITWAHHSLM. The Mitochondrial matrix portion of the chain corresponds to 153 to 155; it reads EGN. The helical transmembrane segment at 156–183 threads the bilayer; the sequence is RNHMLQALFITIALGVYFTLLQASEYYE. The Mitochondrial intermembrane portion of the chain corresponds to 184 to 190; it reads APFTISD. The helical transmembrane segment at 191–223 threads the bilayer; it reads GVYGSTFFVATGFHGLHVIIGSTFLIVCFFRQL. The Mitochondrial matrix portion of the chain corresponds to 224 to 232; it reads KFHFTSSHH. A helical membrane pass occupies residues 233–256; it reads FGFEAAAWYWHFVDVVWLFLYVSI. The Mitochondrial intermembrane portion of the chain corresponds to 257-261; the sequence is YWWGS.

This sequence belongs to the cytochrome c oxidase subunit 3 family. As to quaternary structure, component of the cytochrome c oxidase (complex IV, CIV), a multisubunit enzyme composed of 14 subunits. The complex is composed of a catalytic core of 3 subunits MT-CO1, MT-CO2 and MT-CO3, encoded in the mitochondrial DNA, and 11 supernumerary subunits COX4I, COX5A, COX5B, COX6A, COX6B, COX6C, COX7A, COX7B, COX7C, COX8 and NDUFA4, which are encoded in the nuclear genome. The complex exists as a monomer or a dimer and forms supercomplexes (SCs) in the inner mitochondrial membrane with NADH-ubiquinone oxidoreductase (complex I, CI) and ubiquinol-cytochrome c oxidoreductase (cytochrome b-c1 complex, complex III, CIII), resulting in different assemblies (supercomplex SCI(1)III(2)IV(1) and megacomplex MCI(2)III(2)IV(2)).

It is found in the mitochondrion inner membrane. It carries out the reaction 4 Fe(II)-[cytochrome c] + O2 + 8 H(+)(in) = 4 Fe(III)-[cytochrome c] + 2 H2O + 4 H(+)(out). Component of the cytochrome c oxidase, the last enzyme in the mitochondrial electron transport chain which drives oxidative phosphorylation. The respiratory chain contains 3 multisubunit complexes succinate dehydrogenase (complex II, CII), ubiquinol-cytochrome c oxidoreductase (cytochrome b-c1 complex, complex III, CIII) and cytochrome c oxidase (complex IV, CIV), that cooperate to transfer electrons derived from NADH and succinate to molecular oxygen, creating an electrochemical gradient over the inner membrane that drives transmembrane transport and the ATP synthase. Cytochrome c oxidase is the component of the respiratory chain that catalyzes the reduction of oxygen to water. Electrons originating from reduced cytochrome c in the intermembrane space (IMS) are transferred via the dinuclear copper A center (CU(A)) of subunit 2 and heme A of subunit 1 to the active site in subunit 1, a binuclear center (BNC) formed by heme A3 and copper B (CU(B)). The BNC reduces molecular oxygen to 2 water molecules using 4 electrons from cytochrome c in the IMS and 4 protons from the mitochondrial matrix. The polypeptide is Cytochrome c oxidase subunit 3 (MT-CO3) (Gazella bennettii (Chinkara)).